Consider the following 388-residue polypeptide: UDP-galactose transporter senju (388 aa).

10 helical membrane-spanning segments follow: residues 13–33 (LTFV…IFVT), 46–66 (TVTV…CLYC), 84–104 (VLGL…LAFV), 113–133 (TYYL…QIIF), 142–162 (WISL…FGSF), 202–222 (FSLS…AGVY), 236–256 (IFVQ…VILL), 276–296 (FSVL…SFFL), 309–329 (ALEL…PIYM), and 331–351 (TALA…SPVV).

This sequence belongs to the nucleotide-sugar transporter family.

The protein localises to the golgi apparatus membrane. Functionally, UDP-galactose transporter involved in the synthesis of galactose-containing glycans. Plays a role in quiescence of the innate immune response, possibly by regulating glycosylation of the Toll pathway ligand spz. This is UDP-galactose transporter senju from Drosophila melanogaster (Fruit fly).